A 504-amino-acid polypeptide reads, in one-letter code: Maturase K (504 aa).

Belongs to the intron maturase 2 family. MatK subfamily.

Its subcellular location is the plastid. The protein resides in the chloroplast. Functionally, usually encoded in the trnK tRNA gene intron. Probably assists in splicing its own and other chloroplast group II introns. This is Maturase K from Turritis glabra (Tower mustard).